The sequence spans 353 residues: UPF0658 Golgi apparatus membrane protein C23H3.04 (353 aa).

Transmembrane regions (helical) follow at residues 39-59 (IFFL…EGYC), 76-96 (SLPI…YLCV), 103-123 (NIIE…YSIV), 172-192 (PFLI…GFLA), 226-246 (LLKI…MVLP), 249-269 (AVVE…ILTL), 281-301 (LMMT…FKII), and 318-338 (MITT…AIGF).

It belongs to the UPF0658 family.

The protein localises to the golgi apparatus membrane. This Schizosaccharomyces pombe (strain 972 / ATCC 24843) (Fission yeast) protein is UPF0658 Golgi apparatus membrane protein C23H3.04.